A 281-amino-acid polypeptide reads, in one-letter code: Large ribosomal subunit protein uL2 (281 aa).

The segment at 213 to 281 (RNRHKGIRPT…LIIRRRKESK (69 aa)) is disordered.

Belongs to the universal ribosomal protein uL2 family. Part of the 50S ribosomal subunit. Forms a bridge to the 30S subunit in the 70S ribosome.

In terms of biological role, one of the primary rRNA binding proteins. Required for association of the 30S and 50S subunits to form the 70S ribosome, for tRNA binding and peptide bond formation. It has been suggested to have peptidyltransferase activity; this is somewhat controversial. Makes several contacts with the 16S rRNA in the 70S ribosome. The chain is Large ribosomal subunit protein uL2 from Mycoplasmopsis pulmonis (strain UAB CTIP) (Mycoplasma pulmonis).